The following is a 324-amino-acid chain: GTP cyclohydrolase 1 (324 aa).

2 disordered regions span residues 33–59 (GRNN…NQAE) and 79–119 (VPLA…TPGH). Low complexity predominate over residues 40-49 (STSSTSGTSS). Composition is skewed to polar residues over residues 50-59 (LADRQQNQAE) and 93-117 (TNGS…STTP). Cysteine 214, histidine 217, and cysteine 285 together coordinate Zn(2+).

The protein belongs to the GTP cyclohydrolase I family. As to quaternary structure, toroid-shaped homodecamer, composed of two pentamers of five dimers. As to expression, isoform B is expressed almost exclusively in adult heads.

The enzyme catalyses GTP + H2O = 7,8-dihydroneopterin 3'-triphosphate + formate + H(+). It participates in cofactor biosynthesis; 7,8-dihydroneopterin triphosphate biosynthesis; 7,8-dihydroneopterin triphosphate from GTP: step 1/1. Isoform B is required for eye pigment production, Isoform C may be required for normal embryonic development and segment pattern formation. In Drosophila melanogaster (Fruit fly), this protein is GTP cyclohydrolase 1 (Pu).